The chain runs to 154 residues: 6,7-dimethyl-8-ribityllumazine synthase (154 aa).

Residues Trp-23, 57–59 (AFE), and 81–83 (AVI) each bind 5-amino-6-(D-ribitylamino)uracil. 86–87 (AT) lines the (2S)-2-hydroxy-3-oxobutyl phosphate pocket. His-89 (proton donor) is an active-site residue. A 5-amino-6-(D-ribitylamino)uracil-binding site is contributed by Phe-114. Arg-128 is a binding site for (2S)-2-hydroxy-3-oxobutyl phosphate.

This sequence belongs to the DMRL synthase family.

It carries out the reaction (2S)-2-hydroxy-3-oxobutyl phosphate + 5-amino-6-(D-ribitylamino)uracil = 6,7-dimethyl-8-(1-D-ribityl)lumazine + phosphate + 2 H2O + H(+). It participates in cofactor biosynthesis; riboflavin biosynthesis; riboflavin from 2-hydroxy-3-oxobutyl phosphate and 5-amino-6-(D-ribitylamino)uracil: step 1/2. Catalyzes the formation of 6,7-dimethyl-8-ribityllumazine by condensation of 5-amino-6-(D-ribitylamino)uracil with 3,4-dihydroxy-2-butanone 4-phosphate. This is the penultimate step in the biosynthesis of riboflavin. The polypeptide is 6,7-dimethyl-8-ribityllumazine synthase (Sulfurimonas denitrificans (strain ATCC 33889 / DSM 1251) (Thiomicrospira denitrificans (strain ATCC 33889 / DSM 1251))).